A 315-amino-acid polypeptide reads, in one-letter code: Rhomboid-related protein 4 (315 aa).

Topologically, residues M1–H21 are cytoplasmic. The helical transmembrane segment at V22–F42 threads the bilayer. Topologically, residues L43–Y106 are extracellular. A helical membrane pass occupies residues V107 to A127. Over E128–S138 the chain is Cytoplasmic. Residues C139–Y157 traverse the membrane as a helical segment. S144 serves as the catalytic Nucleophile. Residues C158 to L180 are Extracellular-facing. The helical transmembrane segment at V181–V201 threads the bilayer. The active site involves H195. Residues G202–Q315 lie on the Cytoplasmic side of the membrane. Positions S269–D284 are ubiquitin-binding domain (UBD). The tract at residues W283–Q315 is disordered. Basic and acidic residues predominate over residues S300–Q315. Positions P301–Q315 are VCP/p97-interacting motif (VIM).

It belongs to the peptidase S54 family. Interacts (via C-terminal domain) with VCP. Interacts with ubiquitin and ubiquitinated proteins. Interacts with BIK and STEAP3. In terms of tissue distribution, expressed strongly in testis.

It localises to the endoplasmic reticulum membrane. Its subcellular location is the mitochondrion membrane. The enzyme catalyses Cleaves type-1 transmembrane domains using a catalytic dyad composed of serine and histidine that are contributed by different transmembrane domains.. With respect to regulation, inhibited by aprotinin. Functionally, intramembrane-cleaving serine protease that cleaves single transmembrane or multi-pass membrane proteins in the hydrophobic plane of the membrane, luminal loops and juxtamembrane regions. Involved in regulated intramembrane proteolysis and the subsequent release of functional polypeptides from their membrane anchors. Functional component of endoplasmic reticulum-associated degradation (ERAD) for misfolded membrane proteins. Required for the degradation process of some specific misfolded endoplasmic reticulum (ER) luminal proteins. Participates in the transfer of misfolded proteins from the ER to the cytosol, where they are destroyed by the proteasome in a ubiquitin-dependent manner. Functions in BIK, MPZ, PKD1, PTCRA, RHO, STEAP3 and TRAC processing. Involved in the regulation of exosomal secretion; inhibits the TSAP6-mediated secretion pathway. Involved in the regulation of apoptosis; modulates BIK-mediated apoptotic activity. Also plays a role in the regulation of spermatogenesis; inhibits apoptotic activity in spermatogonia. The protein is Rhomboid-related protein 4 (RHBDD1) of Homo sapiens (Human).